The chain runs to 529 residues: Arginine--tRNA ligase (529 aa).

Positions 113–123 match the 'HIGH' region motif; that stretch reads ANPTGPLHIGH.

This sequence belongs to the class-I aminoacyl-tRNA synthetase family. In terms of assembly, monomer.

The protein resides in the cytoplasm. It catalyses the reaction tRNA(Arg) + L-arginine + ATP = L-arginyl-tRNA(Arg) + AMP + diphosphate. The polypeptide is Arginine--tRNA ligase (Aliarcobacter butzleri (strain RM4018) (Arcobacter butzleri)).